A 445-amino-acid chain; its full sequence is Exodeoxyribonuclease 7 large subunit (445 aa).

It belongs to the XseA family. As to quaternary structure, heterooligomer composed of large and small subunits.

It is found in the cytoplasm. It catalyses the reaction Exonucleolytic cleavage in either 5'- to 3'- or 3'- to 5'-direction to yield nucleoside 5'-phosphates.. Functionally, bidirectionally degrades single-stranded DNA into large acid-insoluble oligonucleotides, which are then degraded further into small acid-soluble oligonucleotides. This Nautilia profundicola (strain ATCC BAA-1463 / DSM 18972 / AmH) protein is Exodeoxyribonuclease 7 large subunit.